A 288-amino-acid polypeptide reads, in one-letter code: Geranylgeranyl diphosphate synthase (288 aa).

2 residues coordinate isopentenyl diphosphate: Arg43 and His73. Mg(2+)-binding residues include Asp80 and Asp86. Arg91 contacts (2E,6E)-farnesyl diphosphate. Arg92 provides a ligand contact to isopentenyl diphosphate. (2E,6E)-farnesyl diphosphate contacts are provided by Lys170, Thr171, and Gln205.

This sequence belongs to the FPP/GGPP synthase family. Requires Mg(2+) as cofactor.

It carries out the reaction isopentenyl diphosphate + (2E,6E)-farnesyl diphosphate = (2E,6E,10E)-geranylgeranyl diphosphate + diphosphate. The protein operates within isoprenoid biosynthesis; geranylgeranyl diphosphate biosynthesis; geranylgeranyl diphosphate from farnesyl diphosphate and isopentenyl diphosphate: step 1/1. Its function is as follows. Catalyzes the condensation of farnesyl diphosphate (FPP) and isopentenyl diphosphate (IPP) to yield geranylgeranyl diphosphate (GGPP) needed for biosynthesis of carotenoids and diterpenes. In Cereibacter sphaeroides (strain ATCC 17023 / DSM 158 / JCM 6121 / CCUG 31486 / LMG 2827 / NBRC 12203 / NCIMB 8253 / ATH 2.4.1.) (Rhodobacter sphaeroides), this protein is Geranylgeranyl diphosphate synthase (crtE).